A 236-amino-acid chain; its full sequence is MGVEGCTKCIKYLLFVFNFVFWLAGGVILGVALWLRHDPQTTNLLYLELGDRPAPNTFYVGIYILIAVGAVMMFVGFLGCYGAIQESQCLLGTFFTCLVILFACEVAAGIWGFVNKDQIAKDVKQFYDQALQQAIVDDDANNAKAVVKTFHETLNCCGSNTLMTLTTSVLKNSLCPSSGNVITNLFKEDCHGKIDELFSGKLYLIGIAAIVVAVIMIFEMILSMVLCCGIRNSSVY.

The Cytoplasmic segment spans residues 1-12; it reads MGVEGCTKCIKY. The chain crosses the membrane as a helical span at residues 13–33; it reads LLFVFNFVFWLAGGVILGVAL. Residues 34-63 are Extracellular-facing; that stretch reads WLRHDPQTTNLLYLELGDRPAPNTFYVGIY. A helical membrane pass occupies residues 64 to 84; the sequence is ILIAVGAVMMFVGFLGCYGAI. At 85–89 the chain is on the cytoplasmic side; the sequence is QESQC. Residues 90–112 form a helical membrane-spanning segment; sequence LLGTFFTCLVILFACEVAAGIWG. At 113–201 the chain is on the extracellular side; it reads FVNKDQIAKD…GKIDELFSGK (89 aa). Intrachain disulfides connect Cys-156–Cys-190 and Cys-157–Cys-175. The helical transmembrane segment at 202 to 224 threads the bilayer; that stretch reads LYLIGIAAIVVAVIMIFEMILSM. A cholesterol-binding site is contributed by Glu-219. The Cytoplasmic portion of the chain corresponds to 225–236; that stretch reads VLCCGIRNSSVY.

The protein belongs to the tetraspanin (TM4SF) family. As to quaternary structure, homodimer. Part of a complex composed of CD19, CR2/CD21, CD81 and IFITM1/CD225 in the membrane of mature B cells. Interacts (via the second extracellular domain) with CD19; this interaction is initiated early during biosynthesis in the ER and enables trafficking of only properly folded CD19. Part of a complex that includes MHC class II/HLA-DR molecules and IFITM1. Interacts with IFITM1. Interacts with IFITM2 and IFITM3. Part of integrin-tetraspanin complex composed of CD9, CD81, beta-1 and beta-2 integrins in the membrane of monocyte/macrophages. Interacts (via the second extracellular domain) with integrin ITGAV:ITGB3. Interacts with CD247/CD3 zeta, ICAM1 and CD9 at the immune synapse on T cell membrane. Part of a GPCR-tetraspanin complex consisting at least of ADGRG1, CD81, possibly CD9, and GNA11 in which CD81 enhances the association of ADGRG1 with GNA11. Part of a complex composed of CD9, CD81, PTGFRN and IGSF8. Interacts directly with IGSF8. Interacts with CD53 and SCIMP. Interacts with SAMHD1 (via its C-terminus). Interacts with glypican GPC3 and with the transcriptional repressor HHEX; binding to GPC3 decreases the availability of free CD81 for binding to HHEX, resulting in nuclear translocation of HHEX and transcriptional repression. Interacts with CLDN1. Interacts with CLDN6 and CLDN9. In terms of processing, not glycosylated. Likely constitutively palmitoylated at low levels. Protein palmitoylation is up-regulated upon coligation of BCR and CD9-C2R-CD81 complexes in lipid rafts.

Its subcellular location is the cell membrane. It is found in the basolateral cell membrane. Functionally, structural component of specialized membrane microdomains known as tetraspanin-enriched microdomains (TERMs), which act as platforms for receptor clustering and signaling. Essential for trafficking and compartmentalization of CD19 receptor on the surface of activated B cells. Upon initial encounter with microbial pathogens, enables the assembly of CD19-CR2/CD21 and B cell receptor (BCR) complexes at signaling TERMs, lowering the threshold dose of antigen required to trigger B cell clonal expansion and antibody production. In T cells, facilitates the localization of CD247/CD3 zeta at antigen-induced synapses with B cells, providing for costimulation and polarization toward T helper type 2 phenotype. Present in MHC class II compartments, may also play a role in antigen presentation. Can act both as positive and negative regulator of homotypic or heterotypic cell-cell fusion processes. Positively regulates sperm-egg fusion and may be involved in acrosome reaction. In myoblasts, associates with CD9 and PTGFRN and inhibits myotube fusion during muscle regeneration. In macrophages, associates with CD9 and beta-1 and beta-2 integrins, and prevents macrophage fusion into multinucleated giant cells specialized in ingesting complement-opsonized large particles. Also prevents the fusion of mononuclear cell progenitors into osteoclasts in charge of bone resorption. May regulate the compartmentalization of enzymatic activities. In T cells, defines the subcellular localization of dNTPase SAMHD1 and permits its degradation by the proteasome, thereby controlling intracellular dNTP levels. Also involved in cell adhesion and motility. Positively regulates integrin-mediated adhesion of macrophages, particularly relevant for the inflammatory response in the lung. This Bos taurus (Bovine) protein is CD81 antigen (CD81).